The sequence spans 176 residues: CDP-archaeol synthase (176 aa).

5 helical membrane-spanning segments follow: residues 12–32 (FIYW…SPVL), 60–80 (GFYV…IILC), 85–105 (ILIG…GSFI), 118–138 (PIID…FLGI), and 141–161 (FISY…LHII).

It belongs to the CDP-archaeol synthase family. Mg(2+) is required as a cofactor.

The protein resides in the cell membrane. The catalysed reaction is 2,3-bis-O-(geranylgeranyl)-sn-glycerol 1-phosphate + CTP + H(+) = CDP-2,3-bis-O-(geranylgeranyl)-sn-glycerol + diphosphate. It functions in the pathway membrane lipid metabolism; glycerophospholipid metabolism. Its function is as follows. Catalyzes the formation of CDP-2,3-bis-(O-geranylgeranyl)-sn-glycerol (CDP-archaeol) from 2,3-bis-(O-geranylgeranyl)-sn-glycerol 1-phosphate (DGGGP) and CTP. This reaction is the third ether-bond-formation step in the biosynthesis of archaeal membrane lipids. This chain is CDP-archaeol synthase, found in Staphylothermus marinus (strain ATCC 43588 / DSM 3639 / JCM 9404 / F1).